A 320-amino-acid chain; its full sequence is ATP-dependent 6-phosphofructokinase (320 aa).

Glycine 11 contacts ATP. 21 to 25 (RAVVR) is an ADP binding site. ATP contacts are provided by residues 72–73 (RY) and 102–105 (GDGS). Residue aspartate 103 participates in Mg(2+) binding. Residue 125–127 (TID) coordinates substrate. Aspartate 127 (proton acceptor) is an active-site residue. Arginine 154 is an ADP binding site. Residues arginine 162 and 169–171 (MGR) each bind substrate. Residues 185-187 (GAD), arginine 211, and 213-215 (KKH) contribute to the ADP site. Substrate-binding positions include glutamate 222, arginine 243, and 249–252 (HVVR).

Belongs to the phosphofructokinase type A (PFKA) family. ATP-dependent PFK group I subfamily. Prokaryotic clade 'B1' sub-subfamily. As to quaternary structure, homotetramer. The cofactor is Mg(2+).

It localises to the cytoplasm. The catalysed reaction is beta-D-fructose 6-phosphate + ATP = beta-D-fructose 1,6-bisphosphate + ADP + H(+). It functions in the pathway carbohydrate degradation; glycolysis; D-glyceraldehyde 3-phosphate and glycerone phosphate from D-glucose: step 3/4. Its activity is regulated as follows. Allosterically activated by ADP and other diphosphonucleosides, and allosterically inhibited by phosphoenolpyruvate. Its function is as follows. Catalyzes the phosphorylation of D-fructose 6-phosphate to fructose 1,6-bisphosphate by ATP, the first committing step of glycolysis. This is ATP-dependent 6-phosphofructokinase from Enterococcus faecalis (strain ATCC 700802 / V583).